We begin with the raw amino-acid sequence, 230 residues long: Ribonuclease 3 (230 aa).

An RNase III domain is found at 7–134 (LEELESKLGI…VIAAIYLDKG (128 aa)). E47 lines the Mg(2+) pocket. Residue D51 is part of the active site. Mg(2+) is bound by residues D120 and E123. Residue E123 is part of the active site. The DRBM domain occupies 161 to 230 (DYKTRLQEIL…ACKALKGLDN (70 aa)).

Belongs to the ribonuclease III family. In terms of assembly, homodimer. Mg(2+) is required as a cofactor.

Its subcellular location is the cytoplasm. It carries out the reaction Endonucleolytic cleavage to 5'-phosphomonoester.. In terms of biological role, digests double-stranded RNA. Involved in the processing of primary rRNA transcript to yield the immediate precursors to the large and small rRNAs (23S and 16S). Processes some mRNAs, and tRNAs when they are encoded in the rRNA operon. Processes pre-crRNA and tracrRNA of type II CRISPR loci if present in the organism. The polypeptide is Ribonuclease 3 (Clostridium acetobutylicum (strain ATCC 824 / DSM 792 / JCM 1419 / IAM 19013 / LMG 5710 / NBRC 13948 / NRRL B-527 / VKM B-1787 / 2291 / W)).